A 159-amino-acid polypeptide reads, in one-letter code: NADH-quinone oxidoreductase subunit I (159 aa).

2 4Fe-4S ferredoxin-type domains span residues 50-80 (QRRYPNGEERCIACKLCEAVCPAMAINIESE) and 90-119 (KRYDIDLTKCIFCGFCEEACPTDAIVETHI). Residues cysteine 60, cysteine 63, cysteine 66, cysteine 70, cysteine 99, cysteine 102, cysteine 105, and cysteine 109 each coordinate [4Fe-4S] cluster.

Belongs to the complex I 23 kDa subunit family. As to quaternary structure, NDH-1 is composed of 14 different subunits. Subunits NuoA, H, J, K, L, M, N constitute the membrane sector of the complex. It depends on [4Fe-4S] cluster as a cofactor.

The protein localises to the cell inner membrane. The catalysed reaction is a quinone + NADH + 5 H(+)(in) = a quinol + NAD(+) + 4 H(+)(out). NDH-1 shuttles electrons from NADH, via FMN and iron-sulfur (Fe-S) centers, to quinones in the respiratory chain. The immediate electron acceptor for the enzyme in this species is believed to be ubiquinone. Couples the redox reaction to proton translocation (for every two electrons transferred, four hydrogen ions are translocated across the cytoplasmic membrane), and thus conserves the redox energy in a proton gradient. This Neisseria meningitidis serogroup A / serotype 4A (strain DSM 15465 / Z2491) protein is NADH-quinone oxidoreductase subunit I.